The sequence spans 308 residues: D-alanine--D-alanine ligase (308 aa).

Positions 105 to 302 (KAIFRSLGLA…FPDLCDRILD (198 aa)) constitute an ATP-grasp domain. ATP is bound at residue 133 to 188 (DLPFGLPCVVKPAGEGSSVGVHLVNAAAELGPACRDAAGYAGDVIVERYVKGTEVD). Mg(2+) is bound by residues aspartate 256, glutamate 269, and asparagine 271.

Belongs to the D-alanine--D-alanine ligase family. Requires Mg(2+) as cofactor. Mn(2+) serves as cofactor.

The protein localises to the cytoplasm. It catalyses the reaction 2 D-alanine + ATP = D-alanyl-D-alanine + ADP + phosphate + H(+). Its pathway is cell wall biogenesis; peptidoglycan biosynthesis. Cell wall formation. The chain is D-alanine--D-alanine ligase from Anaeromyxobacter dehalogenans (strain 2CP-C).